The following is a 142-amino-acid chain: Small ribosomal subunit protein uS12 (142 aa).

The protein belongs to the universal ribosomal protein uS12 family. Part of the 30S ribosomal subunit.

Functionally, with S4 and S5 plays an important role in translational accuracy. Located at the interface of the 30S and 50S subunits. This Methanocorpusculum labreanum (strain ATCC 43576 / DSM 4855 / Z) protein is Small ribosomal subunit protein uS12.